Here is a 437-residue protein sequence, read N- to C-terminus: Transmembrane protease serine 4 (437 aa).

Over 1 to 32 (MLQDPDSDQPLNSLDVKPLRKPRIPMETFRKV) the chain is Cytoplasmic. A helical; Signal-anchor for type II membrane protein transmembrane segment spans residues 33–53 (GIPIIIALLSLASIIIVVVLI). Topologically, residues 54–437 (KVILDKYYFL…WIYNVWKAEL (384 aa)) are extracellular. Residues 61–93 (YFLCGQPLHFIPRKQLCDGELDCPLGEDEEHCV) enclose the LDL-receptor class A domain. Intrachain disulfides connect cysteine 64–cysteine 83, cysteine 77–cysteine 92, cysteine 127–cysteine 183, cysteine 140–cysteine 193, cysteine 196–cysteine 310, cysteine 230–cysteine 246, cysteine 356–cysteine 372, and cysteine 383–cysteine 410. The SRCR domain maps to 94–204 (KSFPEGPAVA…ACGKSLKTPR (111 aa)). Asparagine 130 and asparagine 178 each carry an N-linked (GlcNAc...) asparagine glycan. The Peptidase S1 domain maps to 205–434 (VVGVEEASVD…YLNWIYNVWK (230 aa)). Residues histidine 245 and aspartate 290 each act as charge relay system in the active site. The active-site Charge relay system is the serine 387.

Belongs to the peptidase S1 family. In terms of processing, proteolytically processed; probably by an autocatalytic mechanism. In terms of tissue distribution, high levels in pancreatic, gastric, colorectal and ampullary cancer. Very weak expression in normal gastrointestinal and urogenital tract. Coexpressed with ACE2 within mature enterocytes.

It localises to the cell membrane. The protein resides in the secreted. Its function is as follows. Plasma membrane-anchored serine protease that directly induces processing of pro-uPA/PLAU into the active form through proteolytic activity. Seems to be capable of activating ENaC. Functionally, (Microbial infection) In gut epithelial cells, facilitates human coronavirus SARS-CoV-2 infection through, at least, the cleavage of coronavirus spike glycoproteins which activates the glycoprotein for host cell entry. In Homo sapiens (Human), this protein is Transmembrane protease serine 4.